Reading from the N-terminus, the 1180-residue chain is Integrin alpha-1 (1180 aa).

The first 28 residues, 1–28 (MVPRRPASLEVTVACIWLLTVILGFCVS), serve as a signal peptide directing secretion. Topologically, residues 29-1142 (FNVDVKNSMS…SKDGLPGRVP (1114 aa)) are extracellular. An FG-GAP 1 repeat occupies 30-91 (NVDVKNSMSF…CPVGRERAMP (62 aa)). Residues Cys-82 and Cys-92 are joined by a disulfide bond. Residues Asn-100, Asn-105, Asn-112, Asn-217, Asn-317, Asn-341, Asn-402, Asn-418, and Asn-459 are each glycosylated (N-linked (GlcNAc...) asparagine). One copy of the FG-GAP 2 repeat lies at 101–160 (TSIPNVTEIKENMTFGSTLVTNPNGGFLACGPLYAYRCGHLHYTTGICSDVSPTFQVVNS). The VWFA domain occupies 175–364 (IVLDGSNSIY…LGERIFALEA (190 aa)). The stretch at 365 to 417 (TADQSAASFEMEMSQTGFSAHYSQDWVMLGAVGAYDWNGTVVMQKANQMVIPH) is one FG-GAP 3 repeat. 4 FG-GAP repeats span residues 422 to 474 (QTEP…DGNI), 475 to 537 (NILQ…RFEY), 556 to 614 (SCTK…TIRE), and 618 to 678 (QRIP…FEPN). Asp-497, Asp-499, Asp-501, and Asp-505 together coordinate Ca(2+). A glycan (N-linked (GlcNAc...) asparagine) is linked at Asn-531. 8 residues coordinate Ca(2+): Asp-579, Asn-581, Asp-583, Asp-587, Asp-641, Asn-643, Asp-645, and Asp-649. Residues Cys-687 and Cys-696 are joined by a disulfide bond. 3 N-linked (GlcNAc...) asparagine glycosylation sites follow: Asn-698, Asn-747, and Asn-779. Residues Cys-702 and Cys-755 are joined by a disulfide bond. Residues Cys-807 and Cys-813 are joined by a disulfide bond. 8 N-linked (GlcNAc...) asparagine glycosylation sites follow: Asn-820, Asn-839, Asn-882, Asn-907, Asn-938, Asn-965, Asn-973, and Asn-1007. Cys-877 and Cys-885 are joined by a disulfide. Cystine bridges form between Cys-1029/Cys-1062 and Cys-1066/Cys-1073. Asn-1084, Asn-1103, and Asn-1114 each carry an N-linked (GlcNAc...) asparagine glycan. The helical transmembrane segment at 1143-1165 (LWVILLSAFAGLLLLMLLILALW) threads the bilayer. The Cytoplasmic portion of the chain corresponds to 1166 to 1180 (KIGFFKRPLKKKMEK). The GFFKR motif signature appears at 1168–1172 (GFFKR).

Belongs to the integrin alpha chain family. As to quaternary structure, heterodimer of an alpha and a beta subunit. Alpha-1 associates with beta-1. Interacts with RAB21. Interacts (via cytoplasmic domain) with PTPN2; activates PTPN2 phosphatase activity towards EGFR and negatively regulates EGF signaling.

The protein resides in the membrane. Integrin alpha-1/beta-1 is a receptor for laminin and collagen. It recognizes the proline-hydroxylated sequence G-F-P-G-E-R in collagen. Involved in anchorage-dependent, negative regulation of EGF-stimulated cell growth. The chain is Integrin alpha-1 (Itga1) from Rattus norvegicus (Rat).